Here is a 149-residue protein sequence, read N- to C-terminus: Ribosome-binding factor A (149 aa).

Over residues 116–125 the composition is skewed to basic and acidic residues; that stretch reads TLFEELHPNP. Positions 116–149 are disordered; that stretch reads TLFEELHPNPEEDDGDTDAETLLEDSESGIERET. Over residues 126–143 the composition is skewed to acidic residues; the sequence is EEDDGDTDAETLLEDSES.

This sequence belongs to the RbfA family. Monomer. Binds 30S ribosomal subunits, but not 50S ribosomal subunits or 70S ribosomes.

Its subcellular location is the cytoplasm. One of several proteins that assist in the late maturation steps of the functional core of the 30S ribosomal subunit. Associates with free 30S ribosomal subunits (but not with 30S subunits that are part of 70S ribosomes or polysomes). Required for efficient processing of 16S rRNA. May interact with the 5'-terminal helix region of 16S rRNA. This chain is Ribosome-binding factor A, found in Leptospira biflexa serovar Patoc (strain Patoc 1 / Ames).